The chain runs to 138 residues: MVTTNKNIEEKYIRTVDEVTRNELGKEVNINLVFLSKEKIKKINREFRNINSETDVLTFVYGDDDLFAEIYLCEDVIEENAKKFSNTYEKELLMVLIHAALHCSGYDHEYDKTNAKKMFDLQERYYEKYLKKYGMDNV.

3 residues coordinate Zn(2+): His-98, His-102, and His-108.

The protein belongs to the endoribonuclease YbeY family. Requires Zn(2+) as cofactor.

The protein localises to the cytoplasm. Its function is as follows. Single strand-specific metallo-endoribonuclease involved in late-stage 70S ribosome quality control and in maturation of the 3' terminus of the 16S rRNA. The protein is Endoribonuclease YbeY of Thermosipho melanesiensis (strain DSM 12029 / CIP 104789 / BI429).